The primary structure comprises 134 residues: Putative nickel-responsive regulator (134 aa).

Positions 78, 89, 91, and 97 each coordinate Ni(2+).

It belongs to the transcriptional regulatory CopG/NikR family. The cofactor is Ni(2+).

Its function is as follows. Transcriptional regulator. The sequence is that of Putative nickel-responsive regulator from Chlorobaculum tepidum (strain ATCC 49652 / DSM 12025 / NBRC 103806 / TLS) (Chlorobium tepidum).